The chain runs to 377 residues: Prostaglandin reductase-3 (377 aa).

K35 is subject to N6-acetyllysine. 7 residues coordinate NADP(+): T185, S205, K209, Y224, S247, I269, and Y275. The residue at position 299 (S299) is a Phosphoserine. Residues 303-305 and N361 contribute to the NADP(+) site; that span reads FFL.

It belongs to the zinc-containing alcohol dehydrogenase family. Quinone oxidoreductase subfamily. In terms of tissue distribution, widely expressed.

It is found in the peroxisome. The enzyme catalyses 13,14-dihydro-15-oxo-prostaglandin E2 + NADP(+) = 15-oxoprostaglandin E2 + NADPH + H(+). It carries out the reaction 13,14-dihydro-15-oxo-prostaglandin E1 + NADP(+) = 15-oxoprostaglandin E1 + NADPH + H(+). It catalyses the reaction 13,14-dihydro-15-oxo-PGF2alpha + NADP(+) = 15-oxoprostaglandin F2alpha + NADPH + H(+). The catalysed reaction is 13,14-dihydro-15-oxo-prostaglandin F1alpha + NADP(+) = 15-oxoprostaglandin F1alpha + NADPH + H(+). Functionally, functions as 15-oxo-prostaglandin 13-reductase and acts on 15-keto-PGE1, 15-keto-PGE2, 15-keto-PGE1-alpha and 15-keto-PGE2-alpha with highest efficiency towards 15-keto-PGE2-alpha. Overexpression represses transcriptional activity of PPARG and inhibits adipocyte differentiation. This is Prostaglandin reductase-3 from Mus musculus (Mouse).